The sequence spans 128 residues: MPTIQQLVRDGRYTKSFKTASPALDRCPQKRGVCTRVYTTTPKKPNSALRKVARVRLSNGIEVTAYIPGEGHNLQEHSIVLIRGGRVKDLPGVRYHIVRGSLDTSGVADRRNGRSKYGAKRPKEGAKK.

Asp-89 is modified (3-methylthioaspartic acid). Positions 101 to 128 (SLDTSGVADRRNGRSKYGAKRPKEGAKK) are disordered.

This sequence belongs to the universal ribosomal protein uS12 family. Part of the 30S ribosomal subunit. Contacts proteins S8 and S17. May interact with IF1 in the 30S initiation complex.

In terms of biological role, with S4 and S5 plays an important role in translational accuracy. Its function is as follows. Interacts with and stabilizes bases of the 16S rRNA that are involved in tRNA selection in the A site and with the mRNA backbone. Located at the interface of the 30S and 50S subunits, it traverses the body of the 30S subunit contacting proteins on the other side and probably holding the rRNA structure together. The combined cluster of proteins S8, S12 and S17 appears to hold together the shoulder and platform of the 30S subunit. This Chloroherpeton thalassium (strain ATCC 35110 / GB-78) protein is Small ribosomal subunit protein uS12.